Here is a 140-residue protein sequence, read N- to C-terminus: Probable NADH dehydrogenase [ubiquinone] iron-sulfur protein 6, mitochondrial (140 aa).

The protein belongs to the complex I NDUFS6 subunit family. As to quaternary structure, complex I is composed of 45 different subunits. This is a component of the iron-sulfur (IP) fragment of the enzyme.

It localises to the mitochondrion inner membrane. Functionally, accessory subunit of the mitochondrial membrane respiratory chain NADH dehydrogenase (Complex I), that is believed not to be involved in catalysis. Complex I functions in the transfer of electrons from NADH to the respiratory chain. The immediate electron acceptor for the enzyme is believed to be ubiquinone. This Caenorhabditis elegans protein is Probable NADH dehydrogenase [ubiquinone] iron-sulfur protein 6, mitochondrial (nduf-6).